A 623-amino-acid polypeptide reads, in one-letter code: Arginine--tRNA ligase (623 aa).

The 'HIGH' region motif lies at 116-126 (ANPIHPLHVGH).

It belongs to the class-I aminoacyl-tRNA synthetase family.

The protein localises to the cytoplasm. The enzyme catalyses tRNA(Arg) + L-arginine + ATP = L-arginyl-tRNA(Arg) + AMP + diphosphate. This is Arginine--tRNA ligase from Sulfurisphaera tokodaii (strain DSM 16993 / JCM 10545 / NBRC 100140 / 7) (Sulfolobus tokodaii).